We begin with the raw amino-acid sequence, 708 residues long: Soluble guanylate cyclase gcy-37 (708 aa).

His105 is a heme binding site. Positions 368-409 (LNQSRICQMELNKKLEETMKKMKKMTEELEVKKSQTDRLLFE) form a coiled coil. In terms of domain architecture, Guanylate cyclase spans 434 to 562 (SVIFTDIPDF…NTVNVTKSIC (129 aa)). Mg(2+) contacts are provided by Asp439 and Asp483.

It belongs to the adenylyl cyclase class-4/guanylyl cyclase family. Heterodimer; with other soluble guanylate cyclases. It depends on heme as a cofactor. In terms of tissue distribution, expressed in a small number of neurons, corresponding to URX, AQR and PQR neurons.

The protein resides in the cytoplasm. It catalyses the reaction GTP = 3',5'-cyclic GMP + diphosphate. Its activity is regulated as follows. May be regulated by molecular oxygen. Probably not activated by nitric oxide (NO). Functionally, synthesizes cyclic GMP (cGMP) from GTP. May play a role in sensory neurons. This is Soluble guanylate cyclase gcy-37 (gcy-37) from Caenorhabditis elegans.